We begin with the raw amino-acid sequence, 128 residues long: Early E3 14.5 kDa protein (128 aa).

Belongs to the adenoviridae E3_15 family.

Its function is as follows. Protects virus-infected cells from TNF-induced cytolysis. This is Early E3 14.5 kDa protein from Human adenovirus C serotype 5 (HAdV-5).